Consider the following 207-residue polypeptide: Chaperone protein TorD (207 aa).

The protein belongs to the TorD/DmsD family. TorD subfamily.

The protein localises to the cytoplasm. Involved in the biogenesis of TorA. Acts on TorA before the insertion of the molybdenum cofactor and, as a result, probably favors a conformation of the apoenzyme that is competent for acquiring the cofactor. This chain is Chaperone protein TorD, found in Aggregatibacter aphrophilus (strain NJ8700) (Haemophilus aphrophilus).